A 255-amino-acid chain; its full sequence is Triosephosphate isomerase (255 aa).

Residue 9 to 11 (NWK) participates in substrate binding. The Electrophile role is filled by histidine 95. Glutamate 167 acts as the Proton acceptor in catalysis. Substrate-binding positions include glycine 173, serine 212, and 233-234 (GG).

This sequence belongs to the triosephosphate isomerase family. In terms of assembly, homodimer.

It is found in the cytoplasm. The catalysed reaction is D-glyceraldehyde 3-phosphate = dihydroxyacetone phosphate. Its pathway is carbohydrate biosynthesis; gluconeogenesis. It functions in the pathway carbohydrate degradation; glycolysis; D-glyceraldehyde 3-phosphate from glycerone phosphate: step 1/1. Functionally, involved in the gluconeogenesis. Catalyzes stereospecifically the conversion of dihydroxyacetone phosphate (DHAP) to D-glyceraldehyde-3-phosphate (G3P). The chain is Triosephosphate isomerase from Photorhabdus laumondii subsp. laumondii (strain DSM 15139 / CIP 105565 / TT01) (Photorhabdus luminescens subsp. laumondii).